We begin with the raw amino-acid sequence, 228 residues long: Urease accessory protein UreF (228 aa).

This sequence belongs to the UreF family. As to quaternary structure, ureD, UreF and UreG form a complex that acts as a GTP-hydrolysis-dependent molecular chaperone, activating the urease apoprotein by helping to assemble the nickel containing metallocenter of UreC. The UreE protein probably delivers the nickel.

It is found in the cytoplasm. Its function is as follows. Required for maturation of urease via the functional incorporation of the urease nickel metallocenter. The chain is Urease accessory protein UreF from Yersinia pestis bv. Antiqua (strain Antiqua).